A 532-amino-acid polypeptide reads, in one-letter code: Phosphoenolpyruvate carboxykinase (ATP) (532 aa).

The substrate site is built by R60, Y194, and K200. Residues K200, H219, and 237–245 (GLSGTGKTT) each bind ATP. Residues K200 and H219 each contribute to the Mn(2+) site. D258 contacts Mn(2+). ATP contacts are provided by E286, R324, and T449. Substrate is bound at residue R324.

The protein belongs to the phosphoenolpyruvate carboxykinase (ATP) family. Mn(2+) serves as cofactor.

It localises to the cytoplasm. The enzyme catalyses oxaloacetate + ATP = phosphoenolpyruvate + ADP + CO2. It participates in carbohydrate biosynthesis; gluconeogenesis. In terms of biological role, involved in the gluconeogenesis. Catalyzes the conversion of oxaloacetate (OAA) to phosphoenolpyruvate (PEP) through direct phosphoryl transfer between the nucleoside triphosphate and OAA. The polypeptide is Phosphoenolpyruvate carboxykinase (ATP) (Roseobacter denitrificans (strain ATCC 33942 / OCh 114) (Erythrobacter sp. (strain OCh 114))).